The following is a 1423-amino-acid chain: Serum albumin SDS-1 (1423 aa).

The signal sequence occupies residues 1 to 23; the sequence is MGKAMLKLCITLMVLVFSGTAES. Positions 24-29 are excised as a propeptide; that stretch reads KGVMRR. 7 Albumin domains span residues 29-230, 231-426, 427-608, 609-811, 812-1031, 1032-1226, and 1227-1422; these read REDE…EDFK, HKLT…EFKS, EVEK…SDFK, MDVE…SQAR, QEAL…HTIH, MEIR…AIEK, and VIKD…AIKS. Position 36 (H36) interacts with Cu cation. 16 disulfide bridges follow: C42/C88, C87/C96, C109/C125, C124/C135, C167/C212, C211/C221, C244/C290, C289/C298, C311/C327, C326/C337, C363/C408, C407/C416, C439/C485, C484/C493, C506/C522, and C521/C532. N490 is a glycosylation site (N-linked (GlcNAc...) asparagine). Residue N541 is glycosylated (N-linked (GlcNAc...) asparagine). Intrachain disulfides connect C556–C601, C622–C668, C667–C676, C689–C705, C704–C715, C747–C792, C791–C802, C825–C871, C870–C879, C892–C907, and C906–C947. N652 carries N-linked (GlcNAc...) asparagine glycosylation. N754 carries N-linked (GlcNAc...) asparagine glycosylation. N-linked (GlcNAc...) asparagine glycosylation is found at N908 and N911. Positions 910 to 936 are disordered; it reads SNTSTTTSTTTSTTTSTTTSTTTSTTS. Tandem repeats lie at residues 913–916, 917–920, 921–924, 925–928, 929–932, 933–935, and 936–939. The segment at 913–939 is 7 X 4 AA tandem repeats of S-T-T-T; sequence STTTSTTTSTTTSTTTSTTTSTTSTTT. The N-linked (GlcNAc...) asparagine glycan is linked to N954. 8 disulfides stabilise this stretch: C969-C1014, C1013-C1022, C1045-C1091, C1090-C1099, C1112-C1128, C1127-C1138, C1163-C1208, and C1207-C1216. An N-linked (GlcNAc...) asparagine glycan is attached at N1070. N-linked (GlcNAc...) asparagine glycosylation occurs at N1236. Disulfide bonds link C1239–C1285, C1284–C1291, C1304–C1320, C1319–C1330, C1359–C1404, and C1403–C1412.

It belongs to the ALB/AFP/VDB family. Plasma.

It is found in the secreted. Functionally, serum albumin, the main protein of plasma, has a good binding capacity for water, Ca(2+), Na(+), K(+), fatty acids, hormones, bilirubin and drugs. Its main function is the regulation of the colloidal osmotic pressure of blood. This is Serum albumin SDS-1 (SDS-1) from Petromyzon marinus (Sea lamprey).